The chain runs to 198 residues: NAD(P)H dehydrogenase (quinone) (198 aa).

The Flavodoxin-like domain maps to 4-189; the sequence is ILVLYYSMYG…SIARYQGEYV (186 aa). FMN contacts are provided by residues 10–15 and 78–80; these read SMYGHI and TRF. Tyr12 lines the NAD(+) pocket. A substrate-binding site is contributed by Trp98. Residues 113–118 and His133 each bind FMN; that span reads STGTGG.

Belongs to the WrbA family. Requires FMN as cofactor.

The enzyme catalyses a quinone + NADH + H(+) = a quinol + NAD(+). It catalyses the reaction a quinone + NADPH + H(+) = a quinol + NADP(+). The polypeptide is NAD(P)H dehydrogenase (quinone) (Citrobacter koseri (strain ATCC BAA-895 / CDC 4225-83 / SGSC4696)).